A 70-amino-acid chain; its full sequence is U2-agatoxin-Ao1j (70 aa).

Positions 1–20 are cleaved as a signal peptide; it reads MRAIISLLLISAMVFSMIAA. Residues 21–34 constitute a propeptide that is removed on maturation; sequence VPEEEGLQLSEDER. 3 disulfide bridges follow: Cys37-Cys53, Cys44-Cys58, and Cys52-Cys68. Leu69 bears the Leucine amide mark.

This sequence belongs to the neurotoxin 01 (U2-agtx) family. Expressed by the venom gland.

The protein resides in the secreted. Its function is as follows. Insect active toxin causing rapid but reversible paralysis in crickets. No activity shown in mammals. Does not show effect on mammalian voltage-gated calcium channels. The protein is U2-agatoxin-Ao1j of Agelena orientalis (Funnel-web spider).